A 576-amino-acid polypeptide reads, in one-letter code: Arginine--tRNA ligase (576 aa).

The 'HIGH' region motif lies at 126 to 136 (ANPTGPMHIGH).

Belongs to the class-I aminoacyl-tRNA synthetase family. As to quaternary structure, monomer.

The protein localises to the cytoplasm. It catalyses the reaction tRNA(Arg) + L-arginine + ATP = L-arginyl-tRNA(Arg) + AMP + diphosphate. This chain is Arginine--tRNA ligase, found in Rickettsia canadensis (strain McKiel).